The chain runs to 432 residues: Trigger factor (432 aa).

Residues 161–246 (EDRVTIDFTG…LKKVEERELP (86 aa)) enclose the PPIase FKBP-type domain.

This sequence belongs to the FKBP-type PPIase family. Tig subfamily. Homodimer and monomer. In vivo most of the ribosomes are in complex with monomeric TF. Uncomplexed TF, however, is in a monomer-dimer equilibrium with approximately two thirds of TF existing in a dimeric state.

It is found in the cytoplasm. The enzyme catalyses [protein]-peptidylproline (omega=180) = [protein]-peptidylproline (omega=0). In terms of biological role, involved in protein export. Acts as a chaperone by maintaining the newly synthesized protein in an open conformation. Functions as a peptidyl-prolyl cis-trans isomerase. The sequence is that of Trigger factor from Shigella boydii serotype 4 (strain Sb227).